A 670-amino-acid chain; its full sequence is Sodium/potassium/calcium exchanger 2 (670 aa).

The Cytoplasmic portion of the chain corresponds to 1-38 (MDLHQSATVRLLQEWCSHESPSGCRRHYNTRKKLKLIR). The helical transmembrane segment at 39 to 59 (VIGLVMGLVAVSTVPFSISAF) threads the bilayer. Residues 60-133 (TETYSQNNRG…DVFSLEERRK (74 aa)) lie on the Extracellular side of the membrane. Disordered stretches follow at residues 67–86 (NRGEASDVTGPRAAPGHRQR) and 91–122 (LNDKIRDYTPQPPASQEDRSENGTDHAQGDYP). Residues 106–122 (QEDRSENGTDHAQGDYP) are compositionally biased toward basic and acidic residues. N-linked (GlcNAc...) asparagine glycosylation occurs at Asn-112. A helical transmembrane segment spans residues 134 to 154 (GAIILHVIGMIYMFIALAIVC). Topologically, residues 155–179 (DEFFVPSLTVITEKLGISDDVAGAT) are cytoplasmic. The stretch at 175–215 (VAGATFMAAGGSAPELFTSLIGVFIAHSNVGIGTIVGSAVF) is one Alpha-1 repeat. The helical transmembrane segment at 180–200 (FMAAGGSAPELFTSLIGVFIA) threads the bilayer. Topologically, residues 201-205 (HSNVG) are extracellular. A helical transmembrane segment spans residues 206–226 (IGTIVGSAVFNILFVIGMCAL). The Cytoplasmic portion of the chain corresponds to 227-244 (FSREILNLTWWPLFRDVS). A helical membrane pass occupies residues 245–265 (FYIVDLIMLIIFFLDNVIMWW). Residue Glu-266 is a topological domain, extracellular. Residues 267 to 287 (SLLLLTAYFAYVVFMKFNVQV) form a helical membrane-spanning segment. The Cytoplasmic segment spans residues 288–506 (ERWVKQMINR…PDVRKPASKK (219 aa)). The disordered stretch occupies residues 312–335 (ASTAGDKEEPTLPNKPRLQRGGSS). Phosphoserine occurs at positions 337 and 341. 2 disordered regions span residues 394–414 (KCQVDENERQNGAANHVDYAA) and 450–471 (AADAPQATETAEEDDDQPLSLS). Residues 507–527 (FFPITFFGSITWIAVFSYLMV) form a helical membrane-spanning segment. The Extracellular segment spans residues 528-542 (WWAHQVGETIGISEE). Residues 543–563 (IMGLTILAAGTSIPDLITSVI) traverse the membrane as a helical segment. The stretch at 550–581 (AAGTSIPDLITSVIVARKGLGDMAVSSSVGSN) is one Alpha-2 repeat. Over 564–578 (VARKGLGDMAVSSSV) the chain is Cytoplasmic. Residues 579–599 (GSNIFDITVGLPLPWLLYTII) form a helical membrane-spanning segment. Residues 600-611 (HRFKPVTVSSNG) are Extracellular-facing. Residues 612–632 (LFCAIVLLFIMLIFVILSIAL) form a helical membrane-spanning segment. At 633–639 (CKWRMNK) the chain is on the cytoplasmic side. Residues 640–660 (ILGFIMFGLYFAFLVVSVLLE) form a helical membrane-spanning segment. At 661 to 670 (DKVLECPVSI) the chain is on the extracellular side.

The protein belongs to the Ca(2+):cation antiporter (CaCA) (TC 2.A.19) family. SLC24A subfamily. Expressed abundantly in all regions of the brain and weakly in the eye, large intestine and adrenal tissue.

The protein resides in the cell membrane. The enzyme catalyses Ca(2+)(out) + K(+)(out) + 4 Na(+)(in) = Ca(2+)(in) + K(+)(in) + 4 Na(+)(out). Functionally, calcium, potassium:sodium antiporter that transports 1 Ca(2+) and 1 K(+) in exchange for 4 Na(+). Required for learming and memory by regulating neuronal Ca(2+), which is essential for the development of synaptic plasticity. This is Sodium/potassium/calcium exchanger 2 (Slc24a2) from Rattus norvegicus (Rat).